We begin with the raw amino-acid sequence, 407 residues long: Imidazolonepropionase (407 aa).

The Fe(3+) site is built by H72 and H74. Residues H72 and H74 each contribute to the Zn(2+) site. Residues R81, Y144, and H177 each contribute to the 4-imidazolone-5-propanoate site. Y144 is an N-formimidoyl-L-glutamate binding site. H242 serves as a coordination point for Fe(3+). H242 is a binding site for Zn(2+). Position 245 (Q245) interacts with 4-imidazolone-5-propanoate. D317 is a binding site for Fe(3+). A Zn(2+)-binding site is contributed by D317. Residues N319 and G321 each contribute to the N-formimidoyl-L-glutamate site. A 4-imidazolone-5-propanoate-binding site is contributed by T322.

The protein belongs to the metallo-dependent hydrolases superfamily. HutI family. Zn(2+) serves as cofactor. It depends on Fe(3+) as a cofactor.

It is found in the cytoplasm. It carries out the reaction 4-imidazolone-5-propanoate + H2O = N-formimidoyl-L-glutamate. Its pathway is amino-acid degradation; L-histidine degradation into L-glutamate; N-formimidoyl-L-glutamate from L-histidine: step 3/3. Functionally, catalyzes the hydrolytic cleavage of the carbon-nitrogen bond in imidazolone-5-propanoate to yield N-formimidoyl-L-glutamate. It is the third step in the universal histidine degradation pathway. The chain is Imidazolonepropionase from Rhizobium rhizogenes (Agrobacterium rhizogenes).